Here is a 269-residue protein sequence, read N- to C-terminus: Thiazole synthase (269 aa).

Residue Lys95 is the Schiff-base intermediate with DXP of the active site. Residues Gly156, 182–183, and 204–205 contribute to the 1-deoxy-D-xylulose 5-phosphate site; these read AG and NT.

This sequence belongs to the ThiG family. As to quaternary structure, homotetramer. Forms heterodimers with either ThiH or ThiS.

It is found in the cytoplasm. It carries out the reaction [ThiS sulfur-carrier protein]-C-terminal-Gly-aminoethanethioate + 2-iminoacetate + 1-deoxy-D-xylulose 5-phosphate = [ThiS sulfur-carrier protein]-C-terminal Gly-Gly + 2-[(2R,5Z)-2-carboxy-4-methylthiazol-5(2H)-ylidene]ethyl phosphate + 2 H2O + H(+). It functions in the pathway cofactor biosynthesis; thiamine diphosphate biosynthesis. Functionally, catalyzes the rearrangement of 1-deoxy-D-xylulose 5-phosphate (DXP) to produce the thiazole phosphate moiety of thiamine. Sulfur is provided by the thiocarboxylate moiety of the carrier protein ThiS. In vitro, sulfur can be provided by H(2)S. The polypeptide is Thiazole synthase (Shewanella frigidimarina (strain NCIMB 400)).